The following is a 214-amino-acid chain: Putative pit accessory protein (214 aa).

This sequence belongs to the UPF0111 family.

Functionally, could be involved in orthophosphate transport. This Rhizobium meliloti (strain 1021) (Ensifer meliloti) protein is Putative pit accessory protein.